A 166-amino-acid chain; its full sequence is Small ribosomal subunit protein uS5 (166 aa).

Residues 10–73 (QIEKLISLNR…TSARKNLRFV (64 aa)) enclose the S5 DRBM domain.

The protein belongs to the universal ribosomal protein uS5 family. As to quaternary structure, part of the 30S ribosomal subunit. Contacts proteins S4 and S8.

Its function is as follows. With S4 and S12 plays an important role in translational accuracy. In terms of biological role, located at the back of the 30S subunit body where it stabilizes the conformation of the head with respect to the body. This Borrelia garinii subsp. bavariensis (strain ATCC BAA-2496 / DSM 23469 / PBi) (Borreliella bavariensis) protein is Small ribosomal subunit protein uS5.